The sequence spans 198 residues: Recombination protein RecR (198 aa).

Residues 57–72 (CSVCGHITDRDPCYIC) form a C4-type zinc finger. One can recognise a Toprim domain in the interval 80–175 (SVVCVVQEPK…KVTRIAHGLP (96 aa)).

The protein belongs to the RecR family.

Functionally, may play a role in DNA repair. It seems to be involved in an RecBC-independent recombinational process of DNA repair. It may act with RecF and RecO. This Bacillus mycoides (strain KBAB4) (Bacillus weihenstephanensis) protein is Recombination protein RecR.